We begin with the raw amino-acid sequence, 730 residues long: Propionyl-CoA carboxylase alpha chain, mitochondrial (730 aa).

The N-terminal 52 residues, 1–52, are a transit peptide targeting the mitochondrion; that stretch reads MAGLWVGGSVLVAAGRRGSRSPRPLMRSVALWTLKHVPQYSRQRLLVSRSLC. In terms of domain architecture, Biotin carboxylation spans 62–509; it reads TFDKILIANR…NTKFLSDVYP (448 aa). Lysine 65 is modified (N6-acetyllysine; alternate). At lysine 65 the chain carries N6-succinyllysine; alternate. Lysine 119 bears the N6-succinyllysine mark. Lysine 150 is subject to N6-acetyllysine; alternate. The residue at position 150 (lysine 150) is an N6-succinyllysine; alternate. An N6-acetyllysine modification is found at lysine 154. ATP is bound at residue lysine 177. One can recognise an ATP-grasp domain in the interval 181–378; the sequence is KLLAKKAKVN…LVQEMIRVAK (198 aa). At lysine 188 the chain carries N6-succinyllysine. The residue at position 200 (lysine 200) is an N6-acetyllysine; alternate. The residue at position 200 (lysine 200) is an N6-succinyllysine; alternate. ATP contacts are provided by residues 209–270, glutamate 261, and asparagine 296; that span reads AREI…PRHI. Residue serine 252 is modified to Phosphoserine. The residue at position 262 (lysine 262) is an N6-succinyllysine. Residues glutamate 336, glutamate 349, and asparagine 351 each contribute to the Mg(2+) site. Residues glutamate 336, glutamate 349, and asparagine 351 each contribute to the Mn(2+) site. The active site involves glutamate 349. Lysine 407 carries the post-translational modification N6-succinyllysine. Position 409 (phenylalanine 409) interacts with biotin. Lysine 502, lysine 513, and lysine 650 each carry N6-succinyllysine. In terms of domain architecture, Biotinyl-binding spans 655–730; it reads KAAEDTSSIL…GEGDLLVELE (76 aa). At lysine 696 the chain carries N6-biotinyllysine.

The holoenzyme is a dodecamer composed of 6 PCCA/alpha subunits and 6 PCCB/beta subunits. Interacts (via the biotin carboxylation domain) with SIRT4. Interacts with SIRT3 and SIRT5. The cofactor is Mg(2+). Mn(2+) serves as cofactor. Biotin is required as a cofactor. Acetylated. Post-translationally, the biotin cofactor is covalently attached to the C-terminal biotinyl-binding domain and is required for the catalytic activity. Biotinylation is catalyzed by HLCS.

It is found in the mitochondrion matrix. It catalyses the reaction propanoyl-CoA + hydrogencarbonate + ATP = (S)-methylmalonyl-CoA + ADP + phosphate + H(+). The catalysed reaction is butanoyl-CoA + hydrogencarbonate + ATP = (2S)-ethylmalonyl-CoA + ADP + phosphate + H(+). It participates in metabolic intermediate metabolism; propanoyl-CoA degradation; succinyl-CoA from propanoyl-CoA: step 1/3. Its function is as follows. This is one of the 2 subunits of the biotin-dependent propionyl-CoA carboxylase (PCC), a mitochondrial enzyme involved in the catabolism of odd chain fatty acids, branched-chain amino acids isoleucine, threonine, methionine, and valine and other metabolites. Propionyl-CoA carboxylase catalyzes the carboxylation of propionyl-CoA/propanoyl-CoA to D-methylmalonyl-CoA/(S)-methylmalonyl-CoA. Within the holoenzyme, the alpha subunit catalyzes the ATP-dependent carboxylation of the biotin carried by the biotin carboxyl carrier (BCC) domain, while the beta subunit then tranfers the carboxyl group from carboxylated biotin to propionyl-CoA. Propionyl-CoA carboxylase also significantly acts on butyryl-CoA/butanoyl-CoA, which is converted to ethylmalonyl-CoA/(2S)-ethylmalonyl-CoA at a much lower rate. Other alternative minor substrates include (2E)-butenoyl-CoA/crotonoyl-CoA. In Sus scrofa (Pig), this protein is Propionyl-CoA carboxylase alpha chain, mitochondrial.